The primary structure comprises 467 residues: Glutamate--tRNA ligase (467 aa).

The 'HIGH' region motif lies at 15 to 25; it reads PSPTGYLHVGG. Residues 249–253 carry the 'KMSKS' region motif; sequence KLSKR. Lysine 252 serves as a coordination point for ATP.

This sequence belongs to the class-I aminoacyl-tRNA synthetase family. Glutamate--tRNA ligase type 1 subfamily. In terms of assembly, monomer.

Its subcellular location is the cytoplasm. The enzyme catalyses tRNA(Glu) + L-glutamate + ATP = L-glutamyl-tRNA(Glu) + AMP + diphosphate. Its function is as follows. Catalyzes the attachment of glutamate to tRNA(Glu) in a two-step reaction: glutamate is first activated by ATP to form Glu-AMP and then transferred to the acceptor end of tRNA(Glu). This chain is Glutamate--tRNA ligase, found in Coprothermobacter proteolyticus (strain ATCC 35245 / DSM 5265 / OCM 4 / BT).